Reading from the N-terminus, the 652-residue chain is Putative glycine--tRNA ligase (652 aa).

Residues glycine 119–valine 145 form a disordered region. Glutamate 221 is a binding site for glycine. ATP contacts are provided by residues arginine 253 to glutamate 255 and arginine 264 to valine 265. Glutamate 272 is a glycine binding site. An ATP-binding site is contributed by glutamate 380–cysteine 381. Glycine is bound at residue glutamate 499–serine 501. Arginine 506 provides a ligand contact to ATP.

It belongs to the class-II aminoacyl-tRNA synthetase family. Homodimer.

It localises to the cytoplasm. The catalysed reaction is tRNA(Gly) + glycine + ATP = glycyl-tRNA(Gly) + AMP + diphosphate. It carries out the reaction 2 ATP + H(+) = P(1),P(4)-bis(5'-adenosyl) tetraphosphate + diphosphate. Functionally, catalyzes the ATP-dependent ligation of glycine to the 3'-end of its cognate tRNA, via the formation of an aminoacyl-adenylate intermediate (Gly-AMP). Also produces diadenosine tetraphosphate (Ap4A), a universal pleiotropic signaling molecule needed for cell regulation pathways, by direct condensation of 2 ATPs. Thereby, may play a special role in Ap4A homeostasis. This is Putative glycine--tRNA ligase (grs1) from Schizosaccharomyces pombe (strain 972 / ATCC 24843) (Fission yeast).